The chain runs to 252 residues: 5-oxoprolinase subunit A (252 aa).

Belongs to the LamB/PxpA family. As to quaternary structure, forms a complex composed of PxpA, PxpB and PxpC.

The enzyme catalyses 5-oxo-L-proline + ATP + 2 H2O = L-glutamate + ADP + phosphate + H(+). Catalyzes the cleavage of 5-oxoproline to form L-glutamate coupled to the hydrolysis of ATP to ADP and inorganic phosphate. This is 5-oxoprolinase subunit A from Mycobacterium ulcerans (strain Agy99).